The sequence spans 574 residues: Man(5)GlcNAc(2)-PP-dolichol translocation protein RFT1 (574 aa).

Over 1–24 (MAKKNSQLPSTSEQILERSTTGAT) the chain is Lumenal. A helical transmembrane segment spans residues 25 to 45 (FLMMGQLFTKLVTFILNNLLI). Topologically, residues 46-48 (RFL) are cytoplasmic. The helical transmembrane segment at 49 to 69 (SPRIFGITAFLEFIQGTVLFF) threads the bilayer. Residues 70–110 (SRDAIRLSTLRISDSGNGIIDDDDEEEYQETHYKSKVLQTA) lie on the Lumenal side of the membrane. The helical transmembrane segment at 111 to 131 (VNFAYIPFWIGFPLSIGLIAW) threads the bilayer. Residues 132 to 148 (QYRNINAYFITLPFFRW) are Cytoplasmic-facing. The chain crosses the membrane as a helical span at residues 149 to 169 (SIFLIWLSIIVELLSEPFFIV). Over 170–181 (NQFMLNYAARSR) the chain is Lumenal. Residues 182–202 (FESIAVTTGCIVNFIVVYAVQ) form a helical membrane-spanning segment. Residues 203-218 (QSRYPMGVVTSDIDKE) lie on the Cytoplasmic side of the membrane. Residues 219-239 (GIAILAFALGKLAHSITLLAC) traverse the membrane as a helical segment. Topologically, residues 240–319 (YYWDYLKNFK…INSLCTVEEQ (80 aa)) are lumenal. Residues 320–340 (GIYALLSNYGSLLTRLLFAPI) traverse the membrane as a helical segment. At 341–372 (EESLRLFLARLLSSHNPKNLKLSIEVLVNLTR) the chain is on the cytoplasmic side. The helical transmembrane segment at 373-393 (FYIYLSLMIIVFGPANSSFLL) threads the bilayer. Residues 394–413 (QFLIGSKWSTTSVLDTIRVY) lie on the Lumenal side of the membrane. Residues 414–434 (CFYIPFLSLNGIFEAFFQSVA) traverse the membrane as a helical segment. Topologically, residues 435–443 (TGDQILKHS) are cytoplasmic. Residues 444 to 464 (YFMMAFSGIFLLNSWLLIEKL) traverse the membrane as a helical segment. Residues 465–469 (KLSIE) are Lumenal-facing. A helical membrane pass occupies residues 470 to 490 (GLILSNIINMVLRILYCGVFL). Residues 491–509 (NKFHRELFTDSSFFFNFKD) are Cytoplasmic-facing. A helical membrane pass occupies residues 510 to 530 (FKTVIIAGSTICLLDWWFIGY). At 531–532 (VK) the chain is on the lumenal side. A helical transmembrane segment spans residues 533–553 (NLQQFVVNVLFAMGLLALILV). Residues 554–574 (KERQTIQSFINKRAVSNSKDV) lie on the Cytoplasmic side of the membrane.

Belongs to the RFT1 family.

It localises to the endoplasmic reticulum membrane. It participates in protein modification; protein glycosylation. In terms of biological role, intramembrane glycolipid transporter that operates in the biosynthetic pathway of dolichol-linked oligosaccharides, the glycan precursors employed in protein asparagine (N)-glycosylation. The sequential addition of sugars to dolichol pyrophosphate produces dolichol-linked oligosaccharides containing fourteen sugars, including two GlcNAcs, nine mannoses and three glucoses. Once assembled, the oligosaccharide is transferred from the lipid to nascent proteins by oligosaccharyltransferases. The assembly of dolichol-linked oligosaccharides begins on the cytosolic side of the endoplasmic reticulum membrane and finishes in its lumen. RFT1 could mediate the translocation of the cytosolically oriented intermediate DolPP-GlcNAc2Man5, produced by ALG11, into the ER lumen where dolichol-linked oligosaccharides assembly continues. However, the intramembrane lipid transporter activity could not be confirmed in vitro. The protein is Man(5)GlcNAc(2)-PP-dolichol translocation protein RFT1 of Saccharomyces cerevisiae (strain ATCC 204508 / S288c) (Baker's yeast).